We begin with the raw amino-acid sequence, 155 residues long: Plastocyanin, chloroplastic (155 aa).

A chloroplast-targeting transit peptide spans methionine 1–alanine 58. Residues glutamine 59–asparagine 155 form the Plastocyanin-like domain. Cu cation-binding residues include histidine 95, cysteine 140, histidine 143, and methionine 148.

Belongs to the plastocyanin family. Cu(2+) is required as a cofactor.

Its subcellular location is the plastid. It is found in the chloroplast thylakoid membrane. In terms of biological role, participates in electron transfer between P700 and the cytochrome b6-f complex in photosystem I. In Hordeum vulgare (Barley), this protein is Plastocyanin, chloroplastic (PETE).